The chain runs to 2603 residues: Ankyrin repeat domain-containing protein 17 (2603 aa).

Met1 bears the N-acetylmethionine mark. The segment covering 1–32 (MEKATVPAAAEGEGSPPAAAAVAAPPAAAAAE) has biased composition (low complexity). The interval 1-127 (MEKATVPAAA…DDDEEEEVSE (127 aa)) is disordered. 2 positions are modified to phosphoserine: Ser15 and Ser42. The span at 68 to 77 (PHHKAKRNRT) shows a compositional bias: basic residues. The span at 82-92 (SSSESSSDSDN) shows a compositional bias: low complexity. A compositionally biased stretch (gly residues) spans 93 to 107 (SGGGGGGGGGGGGGT). The segment covering 112–127 (SEEEEDDDDEEEEVSE) has biased composition (acidic residues). Ser152 is subject to Phosphoserine. ANK repeat units lie at residues 229–258 (SDNR…SVNE), 262–291 (EGES…NVED), 296–325 (GDIT…DVNA), 329–358 (TGNT…SIED), 362–391 (NGHT…GINT), 396–425 (FKES…DQEH), 429–458 (EMHT…QVNM), 462–491 (SFES…SLEE), 495–524 (EGYT…NINA), 529–558 (TQET…DIEL), 559–588 (GCST…NVHA), 592–621 (TGDT…DLEH), 625–654 (GGRT…NVNR), 659–688 (NDHT…DPTH), and 692–721 (DGST…NLLA). Residue Lys314 forms a Glycyl lysine isopeptide (Lys-Gly) (interchain with G-Cter in SUMO2) linkage. A disordered region spans residues 770 to 792 (VRSKAASKQKSNSHLPANSQDVQ). The span at 775-792 (ASKQKSNSHLPANSQDVQ) shows a compositional bias: polar residues. At Ser799 the chain carries Phosphoserine. 10 ANK repeats span residues 1078–1107 (NHDT…SIEH), 1111–1140 (KGFT…DIEA), 1145–1174 (TKDT…NKEH), 1178–1207 (SDYT…EINS), 1213–1242 (LGIS…DINA), 1247–1276 (NRNT…NVEH), 1280–1309 (TGLT…DVNA), 1315–1344 (SRDT…HIDV), 1348–1377 (KGNT…DVDA), and 1381–1410 (RKIT…QFPS). Positions 1438 to 1522 (VQAKDRQAAE…EKEKLKVEEE (85 aa)) form a coiled coil. The residue at position 1453 (Ser1453) is a Phosphoserine. 2 disordered regions span residues 1475–1496 (AKRE…RKLE) and 1513–1713 (EKEK…PKRE). The segment covering 1477 to 1487 (REKRKEKRRKK) has biased composition (basic residues). Low complexity-rich tracts occupy residues 1526 to 1546 (LTEP…TWTT), 1598 to 1607 (ESKSSSTSES), and 1616 to 1636 (SSCS…NHAS). A Phosphoserine modification is found at Ser1631. Polar residues-rich tracts occupy residues 1638–1648 (VVTTTMASKKQ) and 1671–1699 (LSET…SPNG). Phosphoserine is present on residues Ser1692, Ser1696, and Ser1705. In terms of domain architecture, KH spans 1721 to 1785 (RRSKKVSVPS…ESTRQATQLI (65 aa)). The residue at position 1870 (Arg1870) is an Asymmetric dimethylarginine. 3 disordered regions span residues 1902-1991 (PRLP…PSVR), 2007-2195 (TTVT…SSSA), and 2269-2327 (VSSQ…YGSV). 2 stretches are compositionally biased toward low complexity: residues 1946 to 1989 (SNQN…SSPS) and 2007 to 2024 (TTVT…TNAT). A phosphoserine mark is found at Ser2038, Ser2040, Ser2041, Ser2043, Ser2055, and Ser2063. 3 stretches are compositionally biased toward low complexity: residues 2068–2077 (ASASEQEASS), 2087–2108 (RPPH…QQPP), and 2175–2189 (PPSH…TPAP). Residues 2269–2298 (VSSQSTPESMLSGKSSYLPNSDPLHQSDTS) show a composition bias toward polar residues. Residues 2303-2313 (FRPPLQRPAPS) show a composition bias toward pro residues. Ser2373 bears the Phosphoserine mark. Residues 2378-2447 (LTPCSSASNE…TGTSAPSVIG (70 aa)) are disordered. The segment covering 2379-2391 (TPCSSASNESPAQ) has biased composition (polar residues). Residues 2392–2411 (SVSSGVRAPSPAPSSVPLGS) show a composition bias toward low complexity. At Ser2401 the chain carries Phosphoserine. The span at 2435 to 2447 (IRQTGTSAPSVIG) shows a compositional bias: polar residues.

In terms of assembly, interacts (via N-terminus) with NOD2. Interacts with CDK2, MCM3, MCM5, MCM7, CDC6 and PCNA. Interacts with MAVS and IFIH1. Interacts (via the second ankyrin repeat cluster) with RIGI. Phosphorylated by CDK2. Highly expressed in fetal liver. Detected in adult liver cells, ovarian oocytes, seminiferous tubules of the testes and pelvic region of the kidney. It was not detected in heart, gut, lung, spleen and skeletal muscle. Earliest specific in situ marker of hepatic differentiation during embryogenesis, useful for characterization of inductive events involved in hepatic specification.

It localises to the cytoplasm. The protein localises to the nucleus. Its function is as follows. Could play pivotal roles in cell cycle and DNA regulation. Involved in innate immune defense against viruse by positively regulating the viral dsRNA receptors RIGI and IFIH1 signaling pathways. Involves in NOD2- and NOD1-mediated responses to bacteria suggesting a role in innate antibacterial immune pathways too. Could play a central role for the formation and/or maintenance of the blood vessels of the circulation system. This chain is Ankyrin repeat domain-containing protein 17 (Ankrd17), found in Mus musculus (Mouse).